The chain runs to 81 residues: Photosystem I iron-sulfur center (81 aa).

4Fe-4S ferredoxin-type domains are found at residues 1-31 (MSHK…MVPW) and 39-68 (IASS…IRVY). The [4Fe-4S] cluster site is built by cysteine 11, cysteine 14, cysteine 17, cysteine 21, cysteine 48, cysteine 51, cysteine 54, and cysteine 58.

In terms of assembly, the cyanobacterial PSI reaction center is composed of one copy each of PsaA,B,C,D,E,F,I,J,K,L,M and X, and forms trimeric complexes. It depends on [4Fe-4S] cluster as a cofactor.

It is found in the cellular thylakoid membrane. It carries out the reaction reduced [plastocyanin] + hnu + oxidized [2Fe-2S]-[ferredoxin] = oxidized [plastocyanin] + reduced [2Fe-2S]-[ferredoxin]. Its function is as follows. Apoprotein for the two 4Fe-4S centers FA and FB of photosystem I (PSI); essential for photochemical activity. FB is the terminal electron acceptor of PSI, donating electrons to ferredoxin. The C-terminus interacts with PsaA/B/D and helps assemble the protein into the PSI complex. Required for binding of PsaD and PsaE to PSI. PSI is a plastocyanin/cytochrome c6-ferredoxin oxidoreductase, converting photonic excitation into a charge separation, which transfers an electron from the donor P700 chlorophyll pair to the spectroscopically characterized acceptors A0, A1, FX, FA and FB in turn. The sequence is that of Photosystem I iron-sulfur center from Rippkaea orientalis (strain PCC 8801 / RF-1) (Cyanothece sp. (strain PCC 8801)).